Reading from the N-terminus, the 450-residue chain is Adenosylhomocysteinase (450 aa).

Substrate contacts are provided by threonine 59, aspartate 135, and glutamate 160. NAD(+) is bound at residue 161–163; it reads TTT. The substrate site is built by lysine 190 and aspartate 194. Residues asparagine 195, 224–229, glutamate 247, 303–305, and asparagine 350 each bind NAD(+); these read GFGDVG and IGH.

Belongs to the adenosylhomocysteinase family. The cofactor is NAD(+).

The protein resides in the cytoplasm. The enzyme catalyses S-adenosyl-L-homocysteine + H2O = L-homocysteine + adenosine. It participates in amino-acid biosynthesis; L-homocysteine biosynthesis; L-homocysteine from S-adenosyl-L-homocysteine: step 1/1. In terms of biological role, adenosylhomocysteine is a competitive inhibitor of S-adenosyl-L-methionine-dependent methyl transferase reactions; therefore adenosylhomocysteinase may play a key role in the control of methylations via regulation of the intracellular concentration of adenosylhomocysteine. This is Adenosylhomocysteinase (SAH1) from Candida albicans (strain SC5314 / ATCC MYA-2876) (Yeast).